The chain runs to 310 residues: Succinate dehydrogenase assembly factor 2, mitochondrial (310 aa).

The span at 35–48 (LKDGSDEASPEVKA) shows a compositional bias: basic and acidic residues. The segment at 35–67 (LKDGSDEASPEVKAHRANQANKAPNQFVPNTTS) is disordered. Positions 52-67 (NQANKAPNQFVPNTTS) are enriched in polar residues.

Belongs to the SDHAF2 family. As to quaternary structure, interacts with the flavoprotein subunit within the SDH catalytic dimer.

It localises to the mitochondrion matrix. Plays an essential role in the assembly of succinate dehydrogenase (SDH), an enzyme complex (also referred to as respiratory complex II) that is a component of both the tricarboxylic acid (TCA) cycle and the mitochondrial electron transport chain, and which couples the oxidation of succinate to fumarate with the reduction of ubiquinone (coenzyme Q) to ubiquinol. Required for flavinylation (covalent attachment of FAD) of the flavoprotein subunit of the SDH catalytic dimer. The polypeptide is Succinate dehydrogenase assembly factor 2, mitochondrial (Penicillium rubens (strain ATCC 28089 / DSM 1075 / NRRL 1951 / Wisconsin 54-1255) (Penicillium chrysogenum)).